Consider the following 342-residue polypeptide: Thioredoxin reductase 2, mitochondrial (342 aa).

Residues 1–23 (MIKHIVSPFRTNFVGISKSVLSR) constitute a mitochondrion transit peptide. FAD-binding positions include 34–37 (SGPA), 56–68 (EGMMANGIAAGGQ), 63–64 (IA), Q68, N77, V110, C168, D311, 311–320 (DVQDSRYRQA), and 318–320 (RQA). The cysteines at positions 165 and 168 are disulfide-linked.

It belongs to the class-II pyridine nucleotide-disulfide oxidoreductase family. As to quaternary structure, homodimer. It depends on FAD as a cofactor.

It is found in the mitochondrion. The enzyme catalyses [thioredoxin]-dithiol + NADP(+) = [thioredoxin]-disulfide + NADPH + H(+). In terms of biological role, acts on mitochondrial thioredoxin 3. Implicated in the defense against oxidative stress. In Saccharomyces cerevisiae (strain ATCC 204508 / S288c) (Baker's yeast), this protein is Thioredoxin reductase 2, mitochondrial.